Reading from the N-terminus, the 172-residue chain is C-phycocyanin beta chain (172 aa).

Position 72 is an N4-methylasparagine (N72). (2R,3E)-phycocyanobilin contacts are provided by C82 and C153.

Belongs to the phycobiliprotein family. As to quaternary structure, heterodimer of an alpha and a beta subunit, which further assembles into trimers and the trimers into hexamers. The basic functional unit of phycobiliproteins is a ring-shaped hexamer formed from two back-to-back trimers contacting via the alpha chain subunits. The trimers are composed of alpha/beta subunit heterodimers arranged around a three-fold axis of symmetry. The phycoerythrins also contain a gamma subunit which is located in the center of the hexamer. In terms of processing, contains two covalently linked bilin chromophores.

The protein localises to the plastid. The protein resides in the chloroplast thylakoid membrane. Light-harvesting photosynthetic bile pigment-protein from the phycobiliprotein complex (phycobilisome, PBS). Phycocyanin is the major phycobiliprotein in the PBS rod. The sequence is that of C-phycocyanin beta chain (cpcB) from Pyropia yezoensis (Susabi-nori).